A 422-amino-acid polypeptide reads, in one-letter code: Proton-gated ion channel subunit pbo-6 (422 aa).

The first 20 residues, 1-20 (MQCSFLTIFIFITTVTVGVA), serve as a signal peptide directing secretion. At 21 to 233 (EFSEQYQGSS…IKVARKPFYY (213 aa)) the chain is on the extracellular side. A disulfide bridge connects residues C151 and C165. A run of 3 helical transmembrane segments spans residues 234–254 (LISLVVPSYIICVLSIAGLFA), 268–288 (LGVTAILSMAVLSLVVTEKVP), and 294–314 (VPLLIVYMHFIIVMVTIATIL). The Cytoplasmic segment spans residues 315-378 (TSTVMRVHAK…GEVSRRMDYL (64 aa)). The chain crosses the membrane as a helical span at residues 379 to 399 (LASVFIIIISTPTLYLFYMCF).

Belongs to the ligand-gated ion channel (TC 1.A.9) family. Acetylcholine receptor (TC 1.A.9.1) subfamily. The functional channel is a hetero-oligomer of pbo-5 and pbo-6. As to expression, expressed in the posterior body muscles.

Its subcellular location is the membrane. Its function is as follows. Forms a proton-gated ion channel with pbo-5 that is activated by acidification of the posterior coelomic space, leading to posterior body wall muscle contraction (pBoc) during the defecation cycle. Not necessary for stimulation of posterior body contraction (pBoc). Does not bind neurotransmitters such as acetylcholine, gamma-aminobutyric acid, glycine, serotonin, glutamate or choline. This is Proton-gated ion channel subunit pbo-6 from Caenorhabditis elegans.